The following is a 200-amino-acid chain: MMLFGKISQQLCGVKKLPWSCDSRYFWGWLNAVFNKVDYDRIRDVGPDRAASEWLLRCGAMVRYHGQERWQKDYNHLPTGPLDKYKIQAIDATDSCIMSIGFDHMEGLEHVEKIRLCKCHYIEDDCLLRLSQLENLQKTILEMEIISCGNITDKGIIALLHLRNLKYLLLSDLPGVREKENLVQAFKTALPSLELKLQLK.

The transit peptide at 1-25 directs the protein to the mitochondrion; that stretch reads MMLFGKISQQLCGVKKLPWSCDSRY. Positions 1 to 61 are N-terminal domain; it reads MMLFGKISQQ…SEWLLRCGAM (61 aa). G59 is a Mg(2+) binding site. LRR repeat units follow at residues 62 to 87, 88 to 116, 117 to 141, and 142 to 173; these read VRYHGQERWQKDYNHLPTGPLDKYKI, QAIDATDSCIMSIGFDHMEGLEHVEKIRL, CKCHYIEDDCLLRLSQLENLQKTIL, and EMEIISCGNITDKGIIALLHLRNLKYLLLSDL. Mg(2+) is bound at residue T93.

Belongs to the ATP synthase subunit s family. As to quaternary structure, homotetramer. Associates with ATP synthase.

The protein localises to the mitochondrion. It localises to the mitochondrion inner membrane. Involved in regulation of mitochondrial membrane ATP synthase. Necessary for H(+) conduction of ATP synthase. Facilitates energy-driven catalysis of ATP synthesis by blocking a proton leak through an alternative proton exit pathway. The polypeptide is ATP synthase subunit s, mitochondrial (DMAC2L) (Pongo abelii (Sumatran orangutan)).